The primary structure comprises 239 residues: Ribosomal RNA small subunit methyltransferase G (239 aa).

Residues G77, F82, 128–129 (AE), and R146 each bind S-adenosyl-L-methionine. Residues 217–239 (RRQTSKKYPRKPGTPNKSPLVES) are disordered.

This sequence belongs to the methyltransferase superfamily. RNA methyltransferase RsmG family.

The protein localises to the cytoplasm. Its function is as follows. Specifically methylates the N7 position of guanine in position 535 of 16S rRNA. The sequence is that of Ribosomal RNA small subunit methyltransferase G from Staphylococcus epidermidis (strain ATCC 12228 / FDA PCI 1200).